The primary structure comprises 1256 residues: Putative protein DDB_G0292252 (1256 aa).

4 disordered regions span residues 1–53, 145–243, 898–951, and 1069–1136; these read MSDD…NNNN, LLNG…SISR, EQQQ…PVET, and SHPT…ATIS. Residues 147–214 show a composition bias toward low complexity; that stretch reads NGNNSNNNSN…NGNNINTSNG (68 aa). The span at 222-243 shows a compositional bias: polar residues; it reads QTESTEQDFTSTSQNSTPSISR. Composition is skewed to low complexity over residues 898 to 916 and 925 to 942; these read EQQQ…SNNE and TTAA…TTTT. Positions 1069–1079 are enriched in polar residues; sequence SHPTIQSTSSP. A compositionally biased stretch (low complexity) spans 1080-1136; it reads STSSSNNNNSTTTATNNNGNNGNNNNGNGNNNNNNNNNNNNNNNNNNNNNNGPATIS.

The sequence is that of Putative protein DDB_G0292252 from Dictyostelium discoideum (Social amoeba).